The chain runs to 110 residues: UPF0251 protein PH0803 (110 aa).

Belongs to the UPF0251 family.

The chain is UPF0251 protein PH0803 from Pyrococcus horikoshii (strain ATCC 700860 / DSM 12428 / JCM 9974 / NBRC 100139 / OT-3).